Here is a 245-residue protein sequence, read N- to C-terminus: tRNA pseudouridine synthase A 2 (245 aa).

The active-site Nucleophile is D53. Substrate is bound at residue Y111.

It belongs to the tRNA pseudouridine synthase TruA family. As to quaternary structure, homodimer.

The catalysed reaction is uridine(38/39/40) in tRNA = pseudouridine(38/39/40) in tRNA. Functionally, formation of pseudouridine at positions 38, 39 and 40 in the anticodon stem and loop of transfer RNAs. This chain is tRNA pseudouridine synthase A 2, found in Bacillus cereus (strain ATCC 10987 / NRS 248).